Here is a 207-residue protein sequence, read N- to C-terminus: Holliday junction branch migration complex subunit RuvA (207 aa).

Positions 1-64 (MIGLISGQVQ…EDAQLLYGFI (64 aa)) are domain I. The tract at residues 65–143 (DRKERDVFRQ…NIEVDNSNLE (79 aa)) is domain II. Positions 144–152 (FAIQPAPIS) are flexible linker. Positions 153-207 (AEDSIIAEVEGALMSLGYKEKEAQQAIKAAKSNGETFADTQSLLKATLQQFQSFK) are domain III.

This sequence belongs to the RuvA family. In terms of assembly, homotetramer. Forms an RuvA(8)-RuvB(12)-Holliday junction (HJ) complex. HJ DNA is sandwiched between 2 RuvA tetramers; dsDNA enters through RuvA and exits via RuvB. An RuvB hexamer assembles on each DNA strand where it exits the tetramer. Each RuvB hexamer is contacted by two RuvA subunits (via domain III) on 2 adjacent RuvB subunits; this complex drives branch migration. In the full resolvosome a probable DNA-RuvA(4)-RuvB(12)-RuvC(2) complex forms which resolves the HJ.

The protein resides in the cytoplasm. The RuvA-RuvB-RuvC complex processes Holliday junction (HJ) DNA during genetic recombination and DNA repair, while the RuvA-RuvB complex plays an important role in the rescue of blocked DNA replication forks via replication fork reversal (RFR). RuvA specifically binds to HJ cruciform DNA, conferring on it an open structure. The RuvB hexamer acts as an ATP-dependent pump, pulling dsDNA into and through the RuvAB complex. HJ branch migration allows RuvC to scan DNA until it finds its consensus sequence, where it cleaves and resolves the cruciform DNA. The chain is Holliday junction branch migration complex subunit RuvA from Psychrobacter arcticus (strain DSM 17307 / VKM B-2377 / 273-4).